Reading from the N-terminus, the 315-residue chain is Ribosomal RNA small subunit methyltransferase H (315 aa).

S-adenosyl-L-methionine contacts are provided by residues 33 to 35 (GGH), aspartate 52, phenylalanine 84, aspartate 106, and glutamine 113. Positions 290–315 (PITASTSELENNNRSHSAKLRVAEKL) are disordered. The segment covering 292–304 (TASTSELENNNRS) has biased composition (polar residues).

Belongs to the methyltransferase superfamily. RsmH family.

It is found in the cytoplasm. It carries out the reaction cytidine(1402) in 16S rRNA + S-adenosyl-L-methionine = N(4)-methylcytidine(1402) in 16S rRNA + S-adenosyl-L-homocysteine + H(+). In terms of biological role, specifically methylates the N4 position of cytidine in position 1402 (C1402) of 16S rRNA. The polypeptide is Ribosomal RNA small subunit methyltransferase H (Lactobacillus helveticus (strain DPC 4571)).